A 503-amino-acid polypeptide reads, in one-letter code: Maturase K (503 aa).

The protein belongs to the intron maturase 2 family. MatK subfamily.

It localises to the plastid. The protein resides in the chloroplast. Usually encoded in the trnK tRNA gene intron. Probably assists in splicing its own and other chloroplast group II introns. The chain is Maturase K from Diospyros kaki (Kaki persimmon).